The chain runs to 384 residues: uncharacterized protein (384 aa).

The protein to S.pombe SpAC2E11.17.

This is an uncharacterized protein from Schizosaccharomyces pombe (strain 972 / ATCC 24843) (Fission yeast).